Here is a 380-residue protein sequence, read N- to C-terminus: Gap junction gamma-1 protein (380 aa).

Topologically, residues 1-22 are cytoplasmic; that stretch reads MSWSFLTRLLDEISNHSTFVGK. A helical membrane pass occupies residues 23 to 45; the sequence is IWLTLFIIFRIVLTVVGGESIYY. At 46–75 the chain is on the extracellular side; it reads DEQSKFVCNTQQPGCENVCYDAFAPLSHVR. The helical transmembrane segment at 76 to 95 threads the bilayer; the sequence is FWVFQIILITTPTIMYLGFA. Topologically, residues 96–171 are cytoplasmic; the sequence is MHKIARSNDV…RRIKRDGLMK (76 aa). A helical transmembrane segment spans residues 172–194; the sequence is VYILQLLSRIIFEVGFLFGQYIL. At 195-228 the chain is on the extracellular side; sequence YGFEVAPSYVCTRSPCPHTVDCFVSRPTEKTIFL. A helical membrane pass occupies residues 229 to 251; it reads LIMYAVSCLCLSLTVLEILHLGL. Residues 252 to 380 are Cytoplasmic-facing; the sequence is SGIRDAFRRR…GSKCEKGIHA (129 aa). The interval 337-380 is disordered; it reads AYQNGESSPSRSSSPESNGTAVEQNRLNFAQEKQGSKCEKGIHA. Residues 342–353 show a composition bias toward low complexity; sequence ESSPSRSSSPES. Residues 354 to 369 are compositionally biased toward polar residues; it reads NGTAVEQNRLNFAQEK. Over residues 370-380 the composition is skewed to basic and acidic residues; it reads QGSKCEKGIHA.

This sequence belongs to the connexin family. Gamma-type subfamily. A connexon is composed of a hexamer of connexins.

It is found in the cell membrane. It localises to the cell junction. The protein resides in the gap junction. Functionally, one gap junction consists of a cluster of closely packed pairs of transmembrane channels, the connexons, through which materials of low MW diffuse from one cell to a neighboring cell. Participates in a developmental pathway for formation of the notochord and tail. This is Gap junction gamma-1 protein (gjc1) from Danio rerio (Zebrafish).